We begin with the raw amino-acid sequence, 415 residues long: Heterogeneous nuclear ribonucleoprotein F (415 aa).

Methionine 1 is modified (N-acetylmethionine). Residue methionine 2 is modified to N-acetylmethionine; in Heterogeneous nuclear ribonucleoprotein F, N-terminally processed. In terms of domain architecture, RRM 1 spans 11 to 90; that stretch reads YVVKLRGLPW…RYIEVFKSHR (80 aa). Lysine 72 is covalently cross-linked (Glycyl lysine isopeptide (Lys-Gly) (interchain with G-Cter in SUMO)). Residues 81–86 form an interaction with RNA region; the sequence is RYIEVF. Lysine 87 is covalently cross-linked (Glycyl lysine isopeptide (Lys-Gly) (interchain with G-Cter in SUMO2)). 3 positions are modified to phosphoserine: serine 104, serine 107, and serine 161. Residues 111–188 enclose the RRM 2 domain; that stretch reads GFVRLRGLPF…RYIEVFKSSQ (78 aa). Lysine 167 is covalently cross-linked (Glycyl lysine isopeptide (Lys-Gly) (interchain with G-Cter in SUMO2)). The interval 179–184 is interaction with RNA; that stretch reads RYIEVF. A Glycyl lysine isopeptide (Lys-Gly) (interchain with G-Cter in SUMO2) cross-link involves residue lysine 185. 3 positions are modified to phosphoserine: serine 187, serine 193, and serine 195. An N6-acetyllysine; alternate modification is found at lysine 200. Lysine 200 is covalently cross-linked (Glycyl lysine isopeptide (Lys-Gly) (interchain with G-Cter in SUMO2); alternate). Phosphothreonine is present on threonine 215. Lysine 224 carries the post-translational modification N6-acetyllysine; alternate. Residue lysine 224 forms a Glycyl lysine isopeptide (Lys-Gly) (interchain with G-Cter in SUMO2); alternate linkage. Serine 265 is subject to Phosphoserine. Residues 289 to 366 form the RRM 3 domain; it reads HCVHMRGLPY…IELFLNSTTG (78 aa). Residues 355–360 are interaction with RNA; the sequence is RYIELF.

Identified in the spliceosome C complex. Interacts with AGO1, AGO2, TBP and TXNL4/DIM1. In terms of processing, sumoylated.

The protein resides in the nucleus. It is found in the nucleoplasm. Its function is as follows. Component of the heterogeneous nuclear ribonucleoprotein (hnRNP) complexes which provide the substrate for the processing events that pre-mRNAs undergo before becoming functional, translatable mRNAs in the cytoplasm. Plays a role in the regulation of alternative splicing events. Binds G-rich sequences in pre-mRNAs and keeps target RNA in an unfolded state. The chain is Heterogeneous nuclear ribonucleoprotein F (Hnrnpf) from Mus musculus (Mouse).